Consider the following 251-residue polypeptide: Triosephosphate isomerase (251 aa).

A substrate-binding site is contributed by 9–11 (NWK). His95 functions as the Electrophile in the catalytic mechanism. Glu167 functions as the Proton acceptor in the catalytic mechanism. Substrate is bound by residues Gly173, Ser213, and 234–235 (GG). A Phosphoserine modification is found at Ser213.

Belongs to the triosephosphate isomerase family. Homodimer.

It is found in the cytoplasm. The catalysed reaction is D-glyceraldehyde 3-phosphate = dihydroxyacetone phosphate. The protein operates within carbohydrate biosynthesis; gluconeogenesis. Its pathway is carbohydrate degradation; glycolysis; D-glyceraldehyde 3-phosphate from glycerone phosphate: step 1/1. Its function is as follows. Involved in the gluconeogenesis. Catalyzes stereospecifically the conversion of dihydroxyacetone phosphate (DHAP) to D-glyceraldehyde-3-phosphate (G3P). This Bacillus cereus (strain B4264) protein is Triosephosphate isomerase.